The primary structure comprises 609 residues: Phosphoenolpyruvate carboxykinase [GTP] (609 aa).

Residues Arg-81 and 220–222 each bind substrate; that span reads YGG. Lys-229 and His-249 together coordinate Mn(2+). Ser-271 is a substrate binding site. 272–277 is a GTP binding site; it reads ACGKTN. Residue Cys-273 is part of the active site. Asp-296 provides a ligand contact to Mn(2+). 387-389 is a substrate binding site; it reads NSR. GTP contacts are provided by residues Arg-389, Arg-420, and 515–518; that span reads FGEN.

Belongs to the phosphoenolpyruvate carboxykinase [GTP] family. In terms of assembly, monomer. The cofactor is Mn(2+).

The protein resides in the cytoplasm. It carries out the reaction oxaloacetate + GTP = phosphoenolpyruvate + GDP + CO2. It participates in carbohydrate biosynthesis; gluconeogenesis. Its function is as follows. Catalyzes the conversion of oxaloacetate (OAA) to phosphoenolpyruvate (PEP), the rate-limiting step in the metabolic pathway that produces glucose from lactate and other precursors derived from the citric acid cycle. The protein is Phosphoenolpyruvate carboxykinase [GTP] of Mycobacterium leprae (strain Br4923).